Consider the following 148-residue polypeptide: Protein NrdI (148 aa).

It belongs to the NrdI family.

Its function is as follows. Probably involved in ribonucleotide reductase function. The chain is Protein NrdI from Corynebacterium glutamicum (strain R).